Reading from the N-terminus, the 332-residue chain is Glycerol-3-phosphate dehydrogenase [NAD(P)+] (332 aa).

Residues Trp11, Arg30, and Lys108 each coordinate NADPH. The sn-glycerol 3-phosphate site is built by Lys108, Gly137, and Ser139. Ala141 is an NADPH binding site. Lys192, Asp245, Ser255, Arg256, and Asn257 together coordinate sn-glycerol 3-phosphate. Lys192 serves as the catalytic Proton acceptor. Arg256 contacts NADPH. 2 residues coordinate NADPH: Val280 and Glu282.

This sequence belongs to the NAD-dependent glycerol-3-phosphate dehydrogenase family.

The protein resides in the cytoplasm. The catalysed reaction is sn-glycerol 3-phosphate + NAD(+) = dihydroxyacetone phosphate + NADH + H(+). It carries out the reaction sn-glycerol 3-phosphate + NADP(+) = dihydroxyacetone phosphate + NADPH + H(+). Its pathway is membrane lipid metabolism; glycerophospholipid metabolism. Its function is as follows. Catalyzes the reduction of the glycolytic intermediate dihydroxyacetone phosphate (DHAP) to sn-glycerol 3-phosphate (G3P), the key precursor for phospholipid synthesis. The sequence is that of Glycerol-3-phosphate dehydrogenase [NAD(P)+] from Burkholderia orbicola (strain MC0-3).